The chain runs to 454 residues: tRNA(Ile)-lysidine synthase (454 aa).

31–36 provides a ligand contact to ATP; sequence SGGADS.

Belongs to the tRNA(Ile)-lysidine synthase family.

It localises to the cytoplasm. It carries out the reaction cytidine(34) in tRNA(Ile2) + L-lysine + ATP = lysidine(34) in tRNA(Ile2) + AMP + diphosphate + H(+). Ligates lysine onto the cytidine present at position 34 of the AUA codon-specific tRNA(Ile) that contains the anticodon CAU, in an ATP-dependent manner. Cytidine is converted to lysidine, thus changing the amino acid specificity of the tRNA from methionine to isoleucine. This Porphyromonas gingivalis (strain ATCC BAA-308 / W83) protein is tRNA(Ile)-lysidine synthase.